Here is a 258-residue protein sequence, read N- to C-terminus: Regulatory protein RecX (258 aa).

Belongs to the RecX family.

Its subcellular location is the cytoplasm. Functionally, modulates RecA activity. The sequence is that of Regulatory protein RecX from Streptococcus mutans serotype c (strain ATCC 700610 / UA159).